Consider the following 168-residue polypeptide: 2-C-methyl-D-erythritol 2,4-cyclodiphosphate synthase (168 aa).

D11 and H13 together coordinate a divalent metal cation. 4-CDP-2-C-methyl-D-erythritol 2-phosphate contacts are provided by residues 11 to 13 (DVH) and 41 to 42 (HS). H49 serves as a coordination point for a divalent metal cation. 4-CDP-2-C-methyl-D-erythritol 2-phosphate is bound by residues 63 to 65 (DIG), 68 to 72 (FPDTD), 139 to 142 (TTTE), F146, and R149.

The protein belongs to the IspF family. In terms of assembly, homotrimer. The cofactor is a divalent metal cation.

It carries out the reaction 4-CDP-2-C-methyl-D-erythritol 2-phosphate = 2-C-methyl-D-erythritol 2,4-cyclic diphosphate + CMP. It functions in the pathway isoprenoid biosynthesis; isopentenyl diphosphate biosynthesis via DXP pathway; isopentenyl diphosphate from 1-deoxy-D-xylulose 5-phosphate: step 4/6. Involved in the biosynthesis of isopentenyl diphosphate (IPP) and dimethylallyl diphosphate (DMAPP), two major building blocks of isoprenoid compounds. Catalyzes the conversion of 4-diphosphocytidyl-2-C-methyl-D-erythritol 2-phosphate (CDP-ME2P) to 2-C-methyl-D-erythritol 2,4-cyclodiphosphate (ME-CPP) with a corresponding release of cytidine 5-monophosphate (CMP). This Psychrobacter arcticus (strain DSM 17307 / VKM B-2377 / 273-4) protein is 2-C-methyl-D-erythritol 2,4-cyclodiphosphate synthase.